The primary structure comprises 180 residues: Ribosome-recycling factor (180 aa).

It belongs to the RRF family.

Its subcellular location is the cytoplasm. Its function is as follows. Responsible for the release of ribosomes from messenger RNA at the termination of protein biosynthesis. May increase the efficiency of translation by recycling ribosomes from one round of translation to another. The protein is Ribosome-recycling factor of Chlamydia caviae (strain ATCC VR-813 / DSM 19441 / 03DC25 / GPIC) (Chlamydophila caviae).